A 318-amino-acid polypeptide reads, in one-letter code: Ribonuclease Z (318 aa).

Residues H62, H64, D66, H67, H139, D210, and H268 each contribute to the Zn(2+) site. Catalysis depends on D66, which acts as the Proton acceptor.

Belongs to the RNase Z family. Homodimer. It depends on Zn(2+) as a cofactor.

The enzyme catalyses Endonucleolytic cleavage of RNA, removing extra 3' nucleotides from tRNA precursor, generating 3' termini of tRNAs. A 3'-hydroxy group is left at the tRNA terminus and a 5'-phosphoryl group is left at the trailer molecule.. Zinc phosphodiesterase, which displays some tRNA 3'-processing endonuclease activity. Probably involved in tRNA maturation, by removing a 3'-trailer from precursor tRNA. In Gloeothece citriformis (strain PCC 7424) (Cyanothece sp. (strain PCC 7424)), this protein is Ribonuclease Z.